We begin with the raw amino-acid sequence, 367 residues long: Glutamate 5-kinase (367 aa).

K10 provides a ligand contact to ATP. Positions 50, 137, and 149 each coordinate substrate. ATP contacts are provided by residues T169–D170 and T211–K217. The 79-residue stretch at A275 to E353 folds into the PUA domain.

Belongs to the glutamate 5-kinase family.

Its subcellular location is the cytoplasm. It carries out the reaction L-glutamate + ATP = L-glutamyl 5-phosphate + ADP. Its pathway is amino-acid biosynthesis; L-proline biosynthesis; L-glutamate 5-semialdehyde from L-glutamate: step 1/2. In terms of biological role, catalyzes the transfer of a phosphate group to glutamate to form L-glutamate 5-phosphate. The sequence is that of Glutamate 5-kinase from Shigella flexneri.